An 84-amino-acid polypeptide reads, in one-letter code: Glutaredoxin (84 aa).

One can recognise a Glutaredoxin domain in the interval 1–84 (MPPVVIYTTA…AGKLDALLSA (84 aa)). Cysteine 12 and cysteine 15 are joined by a disulfide.

The protein belongs to the glutaredoxin family. As to quaternary structure, monomer.

It localises to the cytoplasm. Functionally, has a glutathione-disulfide oxidoreductase activity in the presence of NADPH and glutathione reductase. Reduces low molecular weight disulfides and proteins. The sequence is that of Glutaredoxin (grx) from Pseudomonas aeruginosa (strain ATCC 15692 / DSM 22644 / CIP 104116 / JCM 14847 / LMG 12228 / 1C / PRS 101 / PAO1).